A 207-amino-acid chain; its full sequence is Uracil phosphoribosyltransferase (207 aa).

Residues Arg-77, Arg-102, and 129–137 (DPMVATGGS) contribute to the 5-phospho-alpha-D-ribose 1-diphosphate site. Residues Ile-192 and 197-199 (GDA) each bind uracil. A 5-phospho-alpha-D-ribose 1-diphosphate-binding site is contributed by Asp-198.

Belongs to the UPRTase family. Mg(2+) serves as cofactor.

It catalyses the reaction UMP + diphosphate = 5-phospho-alpha-D-ribose 1-diphosphate + uracil. The protein operates within pyrimidine metabolism; UMP biosynthesis via salvage pathway; UMP from uracil: step 1/1. Allosterically activated by GTP. In terms of biological role, catalyzes the conversion of uracil and 5-phospho-alpha-D-ribose 1-diphosphate (PRPP) to UMP and diphosphate. The chain is Uracil phosphoribosyltransferase from Mycobacterium bovis (strain ATCC BAA-935 / AF2122/97).